The primary structure comprises 673 residues: Glycine--tRNA ligase beta subunit (673 aa).

Belongs to the class-II aminoacyl-tRNA synthetase family. As to quaternary structure, tetramer of two alpha and two beta subunits.

Its subcellular location is the cytoplasm. It catalyses the reaction tRNA(Gly) + glycine + ATP = glycyl-tRNA(Gly) + AMP + diphosphate. The chain is Glycine--tRNA ligase beta subunit from Lactococcus lactis subsp. lactis (strain IL1403) (Streptococcus lactis).